A 551-amino-acid polypeptide reads, in one-letter code: Thermophilic beta-amylase (551 aa).

Positions 1-32 (MIGAFKRLGQKLFLTLLTASLIFASSIVTANA) are cleaved as a signal peptide. Asp73 provides a ligand contact to substrate. Residue Glu80 participates in Ca(2+) binding. Residues His113 and Asp121 each contribute to the substrate site. Glu167 is a binding site for Ca(2+). The active-site Proton donor is Glu195. Positions 310, 315, and 353 each coordinate substrate. Glu392 functions as the Proton acceptor in the catalytic mechanism. Residues 393 to 394 (NA) and Arg423 contribute to the substrate site. The region spanning 448–551 (LTPNGTIPVT…TGSVTITWQN (104 aa)) is the CBM20 domain.

This sequence belongs to the glycosyl hydrolase 14 family. As to quaternary structure, monomer. Requires Ca(2+) as cofactor.

The catalysed reaction is Hydrolysis of (1-&gt;4)-alpha-D-glucosidic linkages in polysaccharides so as to remove successive maltose units from the non-reducing ends of the chains.. This is Thermophilic beta-amylase from Thermoanaerobacterium thermosulfurigenes (Clostridium thermosulfurogenes).